The chain runs to 262 residues: MSGDSVTALPGGSLNWIAVWRRNYIAWKKAALASLLGHLAEPLIYLFGLGAGLGVMVGRVGGVSYTAFLAAGMVATSAMTAATFETIYAAFGRMEGQRTWEAMLYTQLRLGDIVLGEMAWAATKAALAGAGIGVVAAALGYTQWLSLLYALPVIALTGLAFASLGMVVTALAPSYDYFIFYQTLVITPILFLSGAVFPVDQLPIVFQTAARFLPLSHSIDLIRPIMLGHPVVDVCQHVGALCIYIVIPFFLSTALLRRRLLR.

The ABC transmembrane type-2 domain occupies 33-259 (ASLLGHLAEP…FLSTALLRRR (227 aa)). Helical transmembrane passes span 35-55 (LLGHLAEPLIYLFGLGAGLGV), 60-80 (VGGVSYTAFLAAGMVATSAMT), 125-145 (AALAGAGIGVVAAALGYTQWL), 148-168 (LYALPVIALTGLAFASLGMVV), 177-197 (YFIFYQTLVITPILFLSGAVF), and 231-251 (VVDVCQHVGALCIYIVIPFFL).

It belongs to the ABC-2 integral membrane protein family. Lipooligosaccharide exporter (TC 3.A.1.102) subfamily. In terms of assembly, the complex is composed of two ATP-binding proteins (NodI) and two transmembrane proteins (NodJ).

It is found in the cell inner membrane. In terms of biological role, part of the ABC transporter complex NodIJ involved in the export of the nodulation factors (Nod factors), the bacterial signal molecules that induce symbiosis and subsequent nodulation induction. Nod factors are LCO (lipo-chitin oligosaccharide), a modified beta-1,4-linked N-acetylglucosamine oligosaccharide. This subunit encodes the transporter. This Rhizobium leguminosarum bv. trifolii protein is Nodulation protein J (nodJ).